The following is a 541-amino-acid chain: Glucose-6-phosphate isomerase (541 aa).

The active-site Proton donor is the glutamate 346. Active-site residues include histidine 377 and lysine 506.

The protein belongs to the GPI family.

It is found in the cytoplasm. The catalysed reaction is alpha-D-glucose 6-phosphate = beta-D-fructose 6-phosphate. Its pathway is carbohydrate biosynthesis; gluconeogenesis. It functions in the pathway carbohydrate degradation; glycolysis; D-glyceraldehyde 3-phosphate and glycerone phosphate from D-glucose: step 2/4. In terms of biological role, catalyzes the reversible isomerization of glucose-6-phosphate to fructose-6-phosphate. This chain is Glucose-6-phosphate isomerase, found in Rhizobium rhizogenes (strain K84 / ATCC BAA-868) (Agrobacterium radiobacter).